Reading from the N-terminus, the 563-residue chain is Putative cysteine ligase BshC (563 aa).

Residues 474–506 (LEQSLMGTSKQAEKALDTLRQKTQRANRRKHDE) are a coiled coil.

This sequence belongs to the BshC family.

The polypeptide is Putative cysteine ligase BshC (Prosthecochloris aestuarii (strain DSM 271 / SK 413)).